The following is a 117-amino-acid chain: Large ribosomal subunit protein uL24 (117 aa).

It belongs to the universal ribosomal protein uL24 family. In terms of assembly, part of the 50S ribosomal subunit.

In terms of biological role, one of two assembly initiator proteins, it binds directly to the 5'-end of the 23S rRNA, where it nucleates assembly of the 50S subunit. Its function is as follows. One of the proteins that surrounds the polypeptide exit tunnel on the outside of the subunit. This Thermosynechococcus vestitus (strain NIES-2133 / IAM M-273 / BP-1) protein is Large ribosomal subunit protein uL24.